Consider the following 235-residue polypeptide: Glutathione S-transferase 1 (235 aa).

Residues 36–113 (EKYTLTYFNG…LLGGRFGLLG (78 aa)) form the GST N-terminal domain. Glutathione-binding positions include Tyr-42, Trp-73, Lys-77, Val-85, and 97–98 (ES). The 121-residue stretch at 115-235 (NDWEEAKIMA…WIKKRPKTYF (121 aa)) folds into the GST C-terminal domain.

It belongs to the GST superfamily. Homodimer.

The enzyme catalyses RX + glutathione = an S-substituted glutathione + a halide anion + H(+). The chain is Glutathione S-transferase 1 (GST1) from Onchocerca volvulus.